The primary structure comprises 404 residues: S-adenosylmethionine synthase (404 aa).

Residue 139 to 144 coordinates ATP; the sequence is GKGSTD.

Belongs to the AdoMet synthase 2 family. Mg(2+) is required as a cofactor.

The catalysed reaction is L-methionine + ATP + H2O = S-adenosyl-L-methionine + phosphate + diphosphate. The protein operates within amino-acid biosynthesis; S-adenosyl-L-methionine biosynthesis; S-adenosyl-L-methionine from L-methionine: step 1/1. Functionally, catalyzes the formation of S-adenosylmethionine from methionine and ATP. In Saccharolobus islandicus (strain Y.N.15.51 / Yellowstone #2) (Sulfolobus islandicus), this protein is S-adenosylmethionine synthase.